The sequence spans 542 residues: Anaerobic glycerol-3-phosphate dehydrogenase subunit A (542 aa).

10-38 contacts FAD; sequence DVIIIGGGATGAGIARDCALRGLRVILVE.

It belongs to the FAD-dependent glycerol-3-phosphate dehydrogenase family. As to quaternary structure, composed of a catalytic GlpA/B dimer and of membrane bound GlpC. FAD serves as cofactor. The cofactor is FMN.

It is found in the cell inner membrane. The catalysed reaction is a quinone + sn-glycerol 3-phosphate = dihydroxyacetone phosphate + a quinol. The protein operates within polyol metabolism; glycerol degradation via glycerol kinase pathway; glycerone phosphate from sn-glycerol 3-phosphate (anaerobic route): step 1/1. Functionally, conversion of glycerol 3-phosphate to dihydroxyacetone. Uses fumarate or nitrate as electron acceptor. This chain is Anaerobic glycerol-3-phosphate dehydrogenase subunit A (glpA), found in Escherichia coli O157:H7.